Consider the following 273-residue polypeptide: 4-hydroxy-tetrahydrodipicolinate reductase (273 aa).

12–17 (GAAGRM) lines the NAD(+) pocket. Position 39 (Arg-39) interacts with NADP(+). Residues 102 to 104 (GTT) and 126 to 129 (AANF) contribute to the NAD(+) site. Residue His-159 is the Proton donor/acceptor of the active site. His-160 lines the (S)-2,3,4,5-tetrahydrodipicolinate pocket. Residue Lys-163 is the Proton donor of the active site. 169 to 170 (GT) serves as a coordination point for (S)-2,3,4,5-tetrahydrodipicolinate.

Belongs to the DapB family. Homotetramer.

Its subcellular location is the cytoplasm. The enzyme catalyses (S)-2,3,4,5-tetrahydrodipicolinate + NAD(+) + H2O = (2S,4S)-4-hydroxy-2,3,4,5-tetrahydrodipicolinate + NADH + H(+). It carries out the reaction (S)-2,3,4,5-tetrahydrodipicolinate + NADP(+) + H2O = (2S,4S)-4-hydroxy-2,3,4,5-tetrahydrodipicolinate + NADPH + H(+). Its pathway is amino-acid biosynthesis; L-lysine biosynthesis via DAP pathway; (S)-tetrahydrodipicolinate from L-aspartate: step 4/4. Functionally, catalyzes the conversion of 4-hydroxy-tetrahydrodipicolinate (HTPA) to tetrahydrodipicolinate. The protein is 4-hydroxy-tetrahydrodipicolinate reductase of Erwinia tasmaniensis (strain DSM 17950 / CFBP 7177 / CIP 109463 / NCPPB 4357 / Et1/99).